The chain runs to 134 residues: Small ribosomal subunit protein uS9 (134 aa).

The disordered stretch occupies residues 109-134 (DARRTEPHKPSKSSKGPRAKRQKSYR). The span at 118–134 (PSKSSKGPRAKRQKSYR) shows a compositional bias: basic residues.

Belongs to the universal ribosomal protein uS9 family.

This chain is Small ribosomal subunit protein uS9, found in Methanococcus maripaludis (strain C7 / ATCC BAA-1331).